A 434-amino-acid polypeptide reads, in one-letter code: Angio-associated migratory cell protein (434 aa).

The tract at residues 1 to 63 (MESESESGAA…EEEEEEGNEE (63 aa)) is disordered. Serine 20 bears the Phosphoserine mark. A compositionally biased stretch (acidic residues) spans 39–62 (DPDDLAQEMEDVDFEEEEEEEGNE). WD repeat units lie at residues 89 to 129 (LHSA…LLFE), 132 to 171 (GHKD…EVWS), 173 to 212 (EAGD…KTFQ), 214 to 254 (PNCP…HVLK), 258 to 299 (GHQG…GVFR), 315 to 354 (SESN…LRHQ), 356 to 395 (QHQS…LLTD), and 398 to 433 (GHTA…QRPD).

The protein resides in the cell membrane. It localises to the cytoplasm. Its function is as follows. Plays a role in angiogenesis and cell migration. In smooth muscle cell migration, may act through the RhoA pathway. The sequence is that of Angio-associated migratory cell protein (AAMP) from Pongo abelii (Sumatran orangutan).